The chain runs to 97 residues: Integration host factor subunit alpha (97 aa).

The protein belongs to the bacterial histone-like protein family. As to quaternary structure, heterodimer of an alpha and a beta chain.

In terms of biological role, this protein is one of the two subunits of integration host factor, a specific DNA-binding protein that functions in genetic recombination as well as in transcriptional and translational control. This chain is Integration host factor subunit alpha, found in Hydrogenovibrio crunogenus (strain DSM 25203 / XCL-2) (Thiomicrospira crunogena).